Here is a 312-residue protein sequence, read N- to C-terminus: Probable cell division protein WhiA (312 aa).

A DNA-binding region (H-T-H motif) is located at residues Ser274–Gln308.

Belongs to the WhiA family.

Functionally, involved in cell division and chromosome segregation. The polypeptide is Probable cell division protein WhiA (Limosilactobacillus fermentum (strain NBRC 3956 / LMG 18251) (Lactobacillus fermentum)).